We begin with the raw amino-acid sequence, 239 residues long: Putative antitoxin VapB45 (239 aa).

In terms of biological role, possibly the antitoxin component of a type II toxin-antitoxin (TA) system. Its cognate toxin is VapC45. The chain is Putative antitoxin VapB45 from Mycobacterium tuberculosis (strain ATCC 25618 / H37Rv).